The following is a 166-amino-acid chain: UPF0134 protein MPN_138 (166 aa).

This sequence belongs to the UPF0134 family.

The sequence is that of UPF0134 protein MPN_138 from Mycoplasma pneumoniae (strain ATCC 29342 / M129 / Subtype 1) (Mycoplasmoides pneumoniae).